The primary structure comprises 277 residues: Phosphatidylglycerol--prolipoprotein diacylglyceryl transferase (277 aa).

Helical transmembrane passes span 11 to 31 (IIFSIGSFKAHWYGFMYLISF), 55 to 75 (LLYIIFISSCIGGRIGYIIFY), 93 to 113 (GGMSFHGGLIGAIIAMYYLSL), and 117 to 137 (VKILKISDFIVPLVPFGLGAG). Residue Arg-138 participates in a 1,2-diacyl-sn-glycero-3-phospho-(1'-sn-glycerol) binding. 3 consecutive transmembrane segments (helical) span residues 192 to 212 (PSQLYEFFLEGIFLFFIIYFF), 220 to 240 (GSISALFLISYGILRIISEFF), and 256 to 276 (MGQILSIPMIIIGVLYVNLFI).

This sequence belongs to the Lgt family.

The protein localises to the cell inner membrane. It carries out the reaction L-cysteinyl-[prolipoprotein] + a 1,2-diacyl-sn-glycero-3-phospho-(1'-sn-glycerol) = an S-1,2-diacyl-sn-glyceryl-L-cysteinyl-[prolipoprotein] + sn-glycerol 1-phosphate + H(+). It functions in the pathway protein modification; lipoprotein biosynthesis (diacylglyceryl transfer). Functionally, catalyzes the transfer of the diacylglyceryl group from phosphatidylglycerol to the sulfhydryl group of the N-terminal cysteine of a prolipoprotein, the first step in the formation of mature lipoproteins. The sequence is that of Phosphatidylglycerol--prolipoprotein diacylglyceryl transferase from Buchnera aphidicola subsp. Schizaphis graminum (strain Sg).